Reading from the N-terminus, the 172-residue chain is Translocator protein 2 (172 aa).

The next 5 membrane-spanning stretches (helical) occupy residues Pro-3 to Thr-23, Val-45 to Trp-65, Leu-80 to Ala-100, Gly-104 to Trp-124, and Leu-130 to Tyr-150.

This sequence belongs to the TspO/BZRP family. As to quaternary structure, homotetramer. May also form homodimer. In terms of tissue distribution, expressed in erythrocytes (at protein level).

The protein resides in the endoplasmic reticulum membrane. The protein localises to the cell membrane. Cholesterol-binding protein involved in the redistribution of cholesterol from lipid droplets to the endoplasmic reticulum. Required to meet cholesterol demands during erythropoietic differentiation. May play a role in transport processes at the plasma membrane of erythrocytes, including regulating VDAC-mediated ATP export, and import of the heme precursors protoporphyrin IX and 5-aminolevulinic acid. This Canis lupus familiaris (Dog) protein is Translocator protein 2.